The sequence spans 724 residues: Catalase-peroxidase (724 aa).

Residues 98-226 constitute a cross-link (tryptophyl-tyrosyl-methioninium (Trp-Tyr) (with M-252)); that stretch reads WHSAGSYRLA…LAAVQMGLIY (129 aa). His99 functions as the Proton acceptor in the catalytic mechanism. The segment at residues 226 to 252 is a cross-link (tryptophyl-tyrosyl-methioninium (Tyr-Met) (with W-98)); that stretch reads YVNPEGVNGKPDPLKTAAQVRTTFARM. His267 lines the heme b pocket.

The protein belongs to the peroxidase family. Peroxidase/catalase subfamily. Homodimer or homotetramer. It depends on heme b as a cofactor. Post-translationally, formation of the three residue Trp-Tyr-Met cross-link is important for the catalase, but not the peroxidase activity of the enzyme.

It carries out the reaction H2O2 + AH2 = A + 2 H2O. It catalyses the reaction 2 H2O2 = O2 + 2 H2O. Functionally, bifunctional enzyme with both catalase and broad-spectrum peroxidase activity. This is Catalase-peroxidase from Maricaulis maris (strain MCS10) (Caulobacter maris).